The chain runs to 156 residues: Small ribosomal subunit protein uS7 (156 aa).

Belongs to the universal ribosomal protein uS7 family. Part of the 30S ribosomal subunit. Contacts proteins S9 and S11.

In terms of biological role, one of the primary rRNA binding proteins, it binds directly to 16S rRNA where it nucleates assembly of the head domain of the 30S subunit. Is located at the subunit interface close to the decoding center, probably blocks exit of the E-site tRNA. The chain is Small ribosomal subunit protein uS7 from Brachyspira hyodysenteriae (strain ATCC 49526 / WA1).